Consider the following 1010-residue polypeptide: 2-oxoglutarate dehydrogenase-like, mitochondrial (1010 aa).

The N-terminal 107 residues, 1–107, are a transit peptide targeting the mitochondrion; it reads MSQLRLLLFR…RASVSSCTKT (107 aa). The disordered stretch occupies residues 28-47; that stretch reads GGRRRSSGPPTTIPRSRGGV. Positions 130, 143, and 145 each coordinate Ca(2+). Positions 299, 398, 431, 433, and 663 each coordinate thiamine diphosphate. Mg(2+) contacts are provided by Asp398, Asn431, and Ile433.

This sequence belongs to the alpha-ketoglutarate dehydrogenase family. As to quaternary structure, the OGDHC complex comprises multiple copies of three catalytic enzyme components, the 2-oxoglutarate dehydrogenase (OGDH/E1), the dihydrolipoamide dehydrogenase (DLST/E2) and the dihydrolipoamide dehydrogenase (DLD/E3). OGDHL/E1-like isoenzyme may replace OGDH in the OGDHC complex in the brain. The presence of either ODGH/E1 or ODGHL/E1-like isoenzyme in the complex may depend on its tissular distribution. Thiamine diphosphate serves as cofactor. It depends on Mg(2+) as a cofactor. In terms of tissue distribution, the OGDHL-containing OGDHC complex is present in the brain, but not in the heart.

It is found in the mitochondrion matrix. It carries out the reaction N(6)-[(R)-lipoyl]-L-lysyl-[protein] + 2-oxoglutarate + H(+) = N(6)-[(R)-S(8)-succinyldihydrolipoyl]-L-lysyl-[protein] + CO2. Its function is as follows. 2-oxoglutarate dehydrogenase (E1-like) component of the 2-oxoglutarate dehydrogenase multienzyme complex (OGDHC) which mediates the decarboxylation of alpha-ketoglutarate in the tricarboxylic acid cycle. The OGDHC complex catalyzes the overall conversion of 2-oxoglutarate to succinyl-CoA and CO(2) while reducing NAD(+) to NADH. The OGDHC complex is mainly active in the mitochondrion. Involved in the inhibition of cell proliferation and in apoptosis. The protein is 2-oxoglutarate dehydrogenase-like, mitochondrial of Rattus norvegicus (Rat).